The following is a 257-amino-acid chain: uncharacterized protein (257 aa).

The chain crosses the membrane as a helical span at residues 6–26; that stretch reads IFWLNLAAIIIISIVVSGGMF.

This sequence belongs to the staphylococcal tandem lipoprotein family.

The protein localises to the cell membrane. This is an uncharacterized protein from Staphylococcus aureus (strain MSSA476).